Consider the following 347-residue polypeptide: F-box/LRR-repeat/kelch-repeat protein At2g27520 (347 aa).

The F-box domain occupies 1-50; that stretch reads MVRLDLPWDLVDEILSRLPATSLGRLRFTCKRWNALFKDPEFITKQFHKA. LRR repeat units follow at residues 59–82, 152–177, 196–220, and 261–285; these read LSNF…EIAQ, CKLV…NVEK, KFNI…LYQD, and LSWS…ILRI. A Kelch 1 repeat occupies 138–187; that stretch reads KSYDSYKILRITYGCKLVEIFELKSNSWRVLSKVHPNVEKHYYGGVSFKG. One copy of the Kelch 2 repeat lies at 306–347; that stretch reads MIYIVGKNGFKKLSYEKDRSNLWRLPFFFSYVPSLVGLYPPM.

This chain is F-box/LRR-repeat/kelch-repeat protein At2g27520, found in Arabidopsis thaliana (Mouse-ear cress).